A 116-amino-acid chain; its full sequence is SPbeta prophage-derived uncharacterized protein YomQ (116 aa).

The sequence is that of SPbeta prophage-derived uncharacterized protein YomQ (yomQ) from Bacillus subtilis (strain 168).